The primary structure comprises 165 residues: Sporulation-specific cell division protein SsgB (165 aa).

Positions 1–21 (MLVGNSWTRSLEPVSGHEHTE) are disordered.

It belongs to the SsgA family. As to quaternary structure, interacts with SsgA. Interacts with FtsZ (via N-terminus).

Its subcellular location is the cell septum. Its function is as follows. Involved in sporulation-specific cell division. Required for early stages of sporulation. Important in the process of growth cessation prior to sporulation-specific cell division. Recruits cell division protein FtsZ to the future septum sites and tethers the contractile ring structure (Z ring) to the cytoplasmic membrane during sporulation. Stimulates polymerization and filament length of FtsZ in vitro. The chain is Sporulation-specific cell division protein SsgB from Kineococcus radiotolerans (strain ATCC BAA-149 / DSM 14245 / SRS30216).